The sequence spans 251 residues: MNLISIPALQDNYIWLLSNKENRCVIVDPGEASPVLDALAQHALFPEAILLTHHHNDHVGGVHELLKHYPNLPVFGPKETAKCGATSLLEEGNTVSLLNSEFSVIEVPGHTSGHIAYYNAPFLFCGDTLFSAGCGRIFEGTPRQMYESIQKIAVLPDDTVICCAHEYTLSNLRFSNAIWPEDQSIEAYLHEISQIREKSQSSLPTTLGLERRINLFLRCHELDLKRKLSKEPENIENWQVFEMLRSKKDCF.

Residues H53, H55, D57, H58, H110, D127, and H165 each contribute to the Zn(2+) site.

Belongs to the metallo-beta-lactamase superfamily. Glyoxalase II family. Monomer. The cofactor is Zn(2+).

The enzyme catalyses an S-(2-hydroxyacyl)glutathione + H2O = a 2-hydroxy carboxylate + glutathione + H(+). Its pathway is secondary metabolite metabolism; methylglyoxal degradation; (R)-lactate from methylglyoxal: step 2/2. Thiolesterase that catalyzes the hydrolysis of S-D-lactoyl-glutathione to form glutathione and D-lactic acid. The protein is Hydroxyacylglutathione hydrolase of Pectobacterium carotovorum subsp. carotovorum (strain PC1).